The sequence spans 936 residues: General transcription factor II-I repeat domain-containing protein 2 (936 aa).

A GTF2I-like 1 repeat occupies Glu-95–Gly-189. The disordered stretch occupies residues Pro-199 to Thr-222. A GTF2I-like 2 repeat occupies Leu-319–Gly-413.

This sequence belongs to the TFII-I family. Ubiquitous.

It localises to the nucleus. This Mus musculus (Mouse) protein is General transcription factor II-I repeat domain-containing protein 2 (Gtf2ird2).